The following is a 249-amino-acid chain: Putative [LysW]-aminoadipate/[LysW]-glutamate kinase (249 aa).

Substrate is bound by residues R64 and N166.

The protein belongs to the acetylglutamate kinase family. LysZ subfamily.

It is found in the cytoplasm. The catalysed reaction is [amino-group carrier protein]-C-terminal-N-(1,4-dicarboxybutan-1-yl)-L-glutamine + ATP = [amino-group carrier protein]-C-terminal-N-(1-carboxy-5-phosphooxy-5-oxopentan-1-yl)-L-glutamine + ADP. The enzyme catalyses [amino-group carrier protein]-C-terminal-gamma-(L-glutamyl)-L-glutamate + ATP = [amino-group carrier protein]-C-terminal-gamma-(5-phospho-L-glutamyl)-L-glutamate + ADP. It participates in amino-acid biosynthesis; L-lysine biosynthesis via AAA pathway; L-lysine from L-alpha-aminoadipate (Thermus route): step 2/5. The protein operates within amino-acid biosynthesis; L-arginine biosynthesis. Its function is as follows. Involved in both the arginine and lysine biosynthetic pathways. Phosphorylates the LysW-bound precursors glutamate (for arginine biosynthesis), respectively alpha-aminoadipate (for lysine biosynthesis). This chain is Putative [LysW]-aminoadipate/[LysW]-glutamate kinase, found in Pyrococcus horikoshii (strain ATCC 700860 / DSM 12428 / JCM 9974 / NBRC 100139 / OT-3).